The primary structure comprises 187 residues: Large ribosomal subunit protein uL5 (187 aa).

The protein belongs to the universal ribosomal protein uL5 family. In terms of assembly, part of the 50S ribosomal subunit; part of the 5S rRNA/L5/L18/L25 subcomplex. Contacts the 5S rRNA and the P site tRNA. Forms a bridge to the 30S subunit in the 70S ribosome.

Functionally, this is one of the proteins that bind and probably mediate the attachment of the 5S RNA into the large ribosomal subunit, where it forms part of the central protuberance. In the 70S ribosome it contacts protein S13 of the 30S subunit (bridge B1b), connecting the 2 subunits; this bridge is implicated in subunit movement. Contacts the P site tRNA; the 5S rRNA and some of its associated proteins might help stabilize positioning of ribosome-bound tRNAs. The chain is Large ribosomal subunit protein uL5 from Ruegeria sp. (strain TM1040) (Silicibacter sp.).